Reading from the N-terminus, the 398-residue chain is Alpha-monoglucosyldiacylglycerol synthase (398 aa).

The protein belongs to the glycosyltransferase group 1 family. Glycosyltransferase 4 subfamily. It depends on Mg(2+) as a cofactor.

The protein resides in the cell membrane. The catalysed reaction is a 1,2-diacyl-sn-glycerol + UDP-alpha-D-glucose = a 1,2-diacyl-3-O-(alpha-D-glucopyranosyl)-sn-glycerol + UDP + H(+). Its activity is regulated as follows. Activated by the negatively charged lipids phosphatidylglycerol (PG), cardiolipin (CL), dodecylphosphate-rac-glycerol (PDG), 1,2-dioleoyl-phosphatidylglycerol (DOPG) and phosphatidylserine (PS). In terms of biological role, glucosyltransferase involved in the biosynthesis of the non-bilayer-prone membrane lipid alpha-monoglucosyldiacylglycerol. This is a major component for maintaining a certain anionic lipid surface charge density, for balancing the bilayer to non-bilayer phase equilibria and for keeping a constant lipid bilayer spontaneous curvature (curvature packing stress). Catalyzes the transfer of a glucosyl residue from UDP-Glc to diacylglycerol (DAG) acceptor to form the corresponding alpha-glucosyl-DAG (1,2-diacyl-3-O-(alpha-D-glucopyranosyl)-sn-glycerol). It can only use UDP-Glc as sugar donor and DAG is the preferred substrate. The polypeptide is Alpha-monoglucosyldiacylglycerol synthase (mgs) (Acholeplasma laidlawii).